The chain runs to 169 residues: Keratin-associated protein 9-7 (169 aa).

Repeat copies occupy residues 8-12 (CCQPT), 13-17 (CCRTT), 32-36 (CCQPS), 37-41 (CCVSS), 46-50 (CCHPT), 51-55 (CCQNT), 56-60 (CCRTT), 61-65 (CCQPT), 75-79 (CCSTP), 80-84 (CCQPI), 85-89 (CCGSS), 90-94 (CCGQT), 100-104 (CCQPS), 139-143 (CCRPA), 144-148 (CCETT), 149-153 (CCRTT), and 163-167 (CCQPA). A 17 X 5 AA repeats of C-C-[VGSREQH]-[SQTPN]-[STPAI] region spans residues 8-167 (CCQPTCCRTT…TCVTSCCQPA (160 aa)).

It belongs to the KRTAP type 9 family. As to quaternary structure, interacts with hair keratins.

Functionally, in the hair cortex, hair keratin intermediate filaments are embedded in an interfilamentous matrix, consisting of hair keratin-associated proteins (KRTAP), which are essential for the formation of a rigid and resistant hair shaft through their extensive disulfide bond cross-linking with abundant cysteine residues of hair keratins. The matrix proteins include the high-sulfur and high-glycine-tyrosine keratins. In Homo sapiens (Human), this protein is Keratin-associated protein 9-7.